A 452-amino-acid chain; its full sequence is GTPase Obg (452 aa).

Residues 1-158 enclose the Obg domain; that stretch reads MFIDRAKIYV…KWIVLELKVM (158 aa). Disordered stretches follow at residues 66–87 and 117–143; these read GKRGEHGQGSNQHGKSGQDKVI and AEGGRGGRGNTRFANPKNKAPRFSEDG. The OBG-type G domain maps to 159 to 338; it reads AEVGLIGYPN…LLDFVAEKVA (180 aa). Residues 165–172, 190–194, 212–215, 282–285, and 319–321 contribute to the GTP site; these read GYPNVGKS, FTTLN, DIPG, NKMD, and SAA. Residues serine 172 and threonine 192 each coordinate Mg(2+). The OCT domain maps to 376–452; that stretch reads IEEKPKSDFG…KIGNVEFEYQ (77 aa).

It belongs to the TRAFAC class OBG-HflX-like GTPase superfamily. OBG GTPase family. Monomer. The cofactor is Mg(2+).

It is found in the cytoplasm. In terms of biological role, an essential GTPase which binds GTP, GDP and possibly (p)ppGpp with moderate affinity, with high nucleotide exchange rates and a fairly low GTP hydrolysis rate. Plays a role in control of the cell cycle, stress response, ribosome biogenesis and in those bacteria that undergo differentiation, in morphogenesis control. The sequence is that of GTPase Obg from Natranaerobius thermophilus (strain ATCC BAA-1301 / DSM 18059 / JW/NM-WN-LF).